The sequence spans 285 residues: Acetylglutamate kinase (285 aa).

Residues 64–65, arginine 86, and asparagine 180 contribute to the substrate site; that span reads GG.

Belongs to the acetylglutamate kinase family. ArgB subfamily.

It localises to the plastid. It is found in the chloroplast. It carries out the reaction N-acetyl-L-glutamate + ATP = N-acetyl-L-glutamyl 5-phosphate + ADP. The protein operates within amino-acid biosynthesis; L-arginine biosynthesis; N(2)-acetyl-L-ornithine from L-glutamate: step 2/4. Catalyzes the ATP-dependent phosphorylation of N-acetyl-L-glutamate. The polypeptide is Acetylglutamate kinase (Gracilaria tenuistipitata var. liui (Red alga)).